Reading from the N-terminus, the 1139-residue chain is Liprin-alpha (1139 aa).

Coiled-coil stretches lie at residues 30 to 144 (PSDR…SLRM), 172 to 298 (EHHK…KNQI), 329 to 517 (IRDL…AQFQ), and 655 to 701 (QDAQ…EFYD). 2 disordered regions span residues 700-720 (YDDQGISTRSSPRASPQLDNM) and 764-847 (NQFD…DRRK). Polar residues-rich tracts occupy residues 704–719 (GISTRSSPRASPQLDN) and 778–787 (PASSVASSTD). 3 SAM domains span residues 867 to 933 (WNGP…MVSL), 952 to 1016 (NHEY…LKKV), and 1040 to 1109 (WSNE…LVND).

This sequence belongs to the liprin family. Liprin-alpha subfamily. As to expression, detected in vulval muscle and other cells near the vulva; in neurons located in the lateral ganglion, posterior ganglion, ventral cord and lateral body; and in pharyngeal and body wall muscle cells.

It localises to the synapse. Functionally, may play a role in regulating the structure of the neuronal region, called the active zone, from which synaptic vesicles send neurotransmitter signals across the synapse. This may be in association with the liprin-beta protein hlb-1. The protein is Liprin-alpha of Caenorhabditis elegans.